A 110-amino-acid chain; its full sequence is Protein YcgL (110 aa).

Residues 14-98 form the YcgL domain; the sequence is MFCVIYRSSK…PPEDLLKQHL (85 aa). The disordered stretch occupies residues 88-110; sequence PPPEDLLKQHLSSVGQNTSHADR. Positions 97 to 110 are enriched in polar residues; sequence HLSSVGQNTSHADR.

This Salmonella typhi protein is Protein YcgL.